The following is a 283-amino-acid chain: Pantothenate synthetase (283 aa).

31-38 (MGALHDGH) contacts ATP. His38 functions as the Proton donor in the catalytic mechanism. Residue Gln62 participates in (R)-pantoate binding. Gln62 contributes to the beta-alanine binding site. 148–151 (GKKD) serves as a coordination point for ATP. Gln154 provides a ligand contact to (R)-pantoate. ATP is bound by residues Val177 and 185–188 (KSSR).

The protein belongs to the pantothenate synthetase family. As to quaternary structure, homodimer.

The protein localises to the cytoplasm. The enzyme catalyses (R)-pantoate + beta-alanine + ATP = (R)-pantothenate + AMP + diphosphate + H(+). The protein operates within cofactor biosynthesis; (R)-pantothenate biosynthesis; (R)-pantothenate from (R)-pantoate and beta-alanine: step 1/1. Functionally, catalyzes the condensation of pantoate with beta-alanine in an ATP-dependent reaction via a pantoyl-adenylate intermediate. This chain is Pantothenate synthetase, found in Staphylococcus aureus (strain MRSA252).